The sequence spans 470 residues: Cyclin-dependent kinase E-1 (470 aa).

Residues 25 to 333 (YNLVGKIGEG…ASQALEHEYF (309 aa)) enclose the Protein kinase domain. ATP is bound by residues 31-39 (IGEGTYGLV) and Lys55. A Phosphotyrosine modification is found at Tyr36. The Proton acceptor role is filled by Asp154. The disordered stretch occupies residues 428-470 (LNPSVPLQQQRGMAQPHQQQQLRRKDPGMGMSGYAPPNKSRRL). Positions 432–448 (VPLQQQRGMAQPHQQQQ) are enriched in polar residues.

The protein belongs to the protein kinase superfamily. CMGC Ser/Thr protein kinase family. CDC2/CDKX subfamily. As to quaternary structure, interacts with MED14, HDA19 and LUG. Interacts with KIN10. In terms of tissue distribution, expressed in roots, leaves and stems. Expressed in young dividing tissue, such as shoot and root tips, lateral root primordia, young leaves and flowers. Expressed in the inflorescence meristem, inflorescence stem and young flowers.

It is found in the nucleus. It carries out the reaction L-seryl-[protein] + ATP = O-phospho-L-seryl-[protein] + ADP + H(+). The catalysed reaction is L-threonyl-[protein] + ATP = O-phospho-L-threonyl-[protein] + ADP + H(+). The enzyme catalyses [DNA-directed RNA polymerase] + ATP = phospho-[DNA-directed RNA polymerase] + ADP + H(+). Functionally, involved in cell differentiation. Required for the specification of stamen and carpel identities and for the proper termination of stem cells in the floral meristem. This chain is Cyclin-dependent kinase E-1 (CDKE-1), found in Arabidopsis thaliana (Mouse-ear cress).